Reading from the N-terminus, the 531-residue chain is Sop-2-related protein 3 (531 aa).

Expressed ubiquitously.

It localises to the cytoplasm. The protein localises to the nucleus. In terms of biological role, probably acts synergistically with sop-2 to maintain the transcriptionally repressive state of homeotic genes in order to regulate various neurogenic identities. Specification of some neuronal identities also involves expression of non-Hox genes. Specifies dopaminergic and serotonergic neuronal cell fate, and regulates neurotransmitter choice and axon pathfinding. The protein is Sop-2-related protein 3 (sor-3) of Caenorhabditis elegans.